The following is a 168-amino-acid chain: Putative adenylate kinase (168 aa).

ATP contacts are provided by glycine 10, glycine 12, lysine 13, threonine 14, and threonine 15. The interval 28–51 is NMP; sequence HLNERIREEGLDAGRDEERDSLVA. The tract at residues 97 to 107 is LID; that stretch reads DRGEPAAKAAE. Arginine 98 lines the ATP pocket.

The protein belongs to the adenylate kinase family. AK6 subfamily. In terms of assembly, interacts with uS11. Not a structural component of 40S pre-ribosomes, but transiently interacts with them by binding to uS11.

It carries out the reaction AMP + ATP = 2 ADP. It catalyses the reaction ATP + H2O = ADP + phosphate + H(+). Functionally, broad-specificity nucleoside monophosphate (NMP) kinase that catalyzes the reversible transfer of the terminal phosphate group between nucleoside triphosphates and monophosphates. Also has ATPase activity. Involved in the late maturation steps of the 30S ribosomal particles, specifically 16S rRNA maturation. While NMP activity is not required for ribosome maturation, ATPase activity is. Associates transiently with small ribosomal subunit protein uS11. ATP hydrolysis breaks the interaction with uS11. May temporarily remove uS11 from the ribosome to enable a conformational change of the ribosomal RNA that is needed for the final maturation step of the small ribosomal subunit. The protein is Putative adenylate kinase of Natronomonas pharaonis (strain ATCC 35678 / DSM 2160 / CIP 103997 / JCM 8858 / NBRC 14720 / NCIMB 2260 / Gabara) (Halobacterium pharaonis).